The primary structure comprises 301 residues: GTP cyclohydrolase FolE2 (301 aa).

It belongs to the GTP cyclohydrolase IV family.

The enzyme catalyses GTP + H2O = 7,8-dihydroneopterin 3'-triphosphate + formate + H(+). The protein operates within cofactor biosynthesis; 7,8-dihydroneopterin triphosphate biosynthesis; 7,8-dihydroneopterin triphosphate from GTP: step 1/1. Converts GTP to 7,8-dihydroneopterin triphosphate. In Pseudomonas putida (strain GB-1), this protein is GTP cyclohydrolase FolE2.